A 261-amino-acid polypeptide reads, in one-letter code: Claudin-18 (261 aa).

The Cytoplasmic segment spans residues 1 to 6 (MSTTRC). A helical membrane pass occupies residues 7–27 (QVVGFLLSILGLAGCIVATEM). The Extracellular portion of the chain corresponds to 28–80 (DMWSTQDLYDNPVTAVFQYEGLWRSCVQQSSGFTECRPYLTILGLPAMLQAVR). The helical transmembrane segment at 81-101 (ALMIVGIVLSVIGLLVAIFAL) threads the bilayer. Residues 102-122 (KCIRMGNMDDSAKAKMTLTSG) are Cytoplasmic-facing. Residues 123–143 (IMFIIAGLCAIAGVSVFANML) form a helical membrane-spanning segment. Over 144–174 (VTNFWMSTASMFTSMGGMVQTVQTRYTFGAA) the chain is Extracellular. The helical transmembrane segment at 175 to 195 (LFVGWVAGGLTLIGGVLMCIA) threads the bilayer. The interval 195 to 261 (ACRGLAPEET…QSPPSKYDYV (67 aa)) is required for role in regulation of RANKL-induced osteoclast differentiation. Residues 196-261 (CRGLAPEETN…QSPPSKYDYV (66 aa)) lie on the Cytoplasmic side of the membrane. Serine 214 carries the phosphoserine modification. The interval 228–261 (SSGFESNTRNKKIYDGGARTEDEGQSPPSKYDYV) is disordered. A compositionally biased stretch (basic and acidic residues) spans 239–249 (KIYDGGARTED).

This sequence belongs to the claudin family. As to quaternary structure, interacts with TJP2/ZO-2. Interacts with TJP1/ZO-1. Interacts with YAP1 (phosphorylated); the interaction sequesters YAP1 away from the nucleus and thereby restricts transcription of YAP1 target genes. Interacts with CLDN19.

It localises to the cell junction. The protein localises to the tight junction. It is found in the cell membrane. Functionally, involved in alveolar fluid homeostasis via regulation of alveolar epithelial tight junction composition and therefore ion transport and solute permeability, potentially via downstream regulation of the actin cytoskeleton organization and beta-2-adrenergic signaling. Required for lung alveolarization and maintenance of the paracellular alveolar epithelial barrier. Acts to maintain epithelial progenitor cell proliferation and organ size, via regulation of YAP1 localization away from the nucleus and thereby restriction of YAP1 target gene transcription. Acts as a negative regulator of RANKL-induced osteoclast differentiation, potentially via relocation of TJP2/ZO-2 away from the nucleus, subsequently involved in bone resorption in response to calcium deficiency. Mediates the osteoprotective effects of estrogen, potentially via acting downstream of estrogen signaling independently of RANKL signaling pathways. This Bos taurus (Bovine) protein is Claudin-18 (CLDN18).